We begin with the raw amino-acid sequence, 76 residues long: 8.4 kDa cro protein (76 aa).

This is 8.4 kDa cro protein (cro-HTT) from Escherichia coli (Bacteriophage HK022).